Reading from the N-terminus, the 500-residue chain is E3 ubiquitin-protein ligase TRIM69 (500 aa).

Residues 1–22 are disordered; the sequence is MEVSSRPPSNFDPGNYVEMSDP. The segment at 1 to 153 is necessary for nuclear localization; the sequence is MEVSSRPPSN…SMGQSKDFLQ (153 aa). The RING-type zinc-finger motif lies at 42–83; it reads CPLCNDWFRDPLMLTCGHNFCQDCIQSFWKVHSKETFCPDCK. Positions 217–256 form a coiled coil; that stretch reads NKEKDILNDLRDEGKLLNEEMEVNLNQIQEQCLVAKDMLA. The B30.2/SPRY domain maps to 306-500; that stretch reads PIQYIIWKEM…KEPLHIVHPQ (195 aa). Serine 342 is subject to Phosphoserine.

The protein belongs to the TRIM/RBCC family. In terms of assembly, homo-multimer; required for antiviral activity. Interacts with PML. Post-translationally, phosphorylated. Phosphorylation is necessary for nuclear localization. In terms of tissue distribution, expressed in spermatid.

The protein resides in the cytoplasm. The protein localises to the nucleus. It is found in the nucleus speckle. It localises to the cytoskeleton. Its subcellular location is the microtubule organizing center. The protein resides in the centrosome. It catalyses the reaction S-ubiquitinyl-[E2 ubiquitin-conjugating enzyme]-L-cysteine + [acceptor protein]-L-lysine = [E2 ubiquitin-conjugating enzyme]-L-cysteine + N(6)-ubiquitinyl-[acceptor protein]-L-lysine.. Its pathway is protein modification; protein ubiquitination. In terms of biological role, E3 ubiquitin ligase that plays an important role in antiviral immunity by restricting different viral infections including dengue virus or vesicular stomatitis indiana virus. Ubiquitinates viral proteins such as dengue virus NS3 thereby limiting infection. In addition, acts as a key mediator of type I interferon induced microtubule stabilization by directly associating to microtubules independently of its E3 ligase activity. Also plays a role in cataract formation together with TP53. Mechanistically, inhibits UVB-induced cell apoptosis and reactive oxygen species (ROS) production by inducing TP53 ubiquitination. Regulates centrosome dynamics and mitotic progression by ubiquitinating STK3/MST2; leading to its redistribution to the perinuclear cytoskeleton and subsequent phosphorylation by PLK1. This Mus musculus (Mouse) protein is E3 ubiquitin-protein ligase TRIM69 (Trim69).